We begin with the raw amino-acid sequence, 191 residues long: RRP15-like protein (191 aa).

The segment covering 1–11 (MSTKNRDRLVV) has biased composition (basic and acidic residues). The disordered stretch occupies residues 1–52 (MSTKNRDRLVVTEDSDDDNEREEMSSGGESGEEGPSSVDGGAGDADETVAFP). A coiled-coil region spans residues 53–84 (AIERRKKKVIKKLTKKEQSLKKSVKEYRIKLA). The segment covering 119–153 (QKTMSDAVKEKMTARERREARQRFDGKNFDSDRFA) has biased composition (basic and acidic residues). Residues 119–191 (QKTMSDAVKE…IDTGNYSDED (73 aa)) are disordered. Over residues 166–191 (GEDDDGEDQMDIGEEQIDTGNYSDED) the composition is skewed to acidic residues.

It belongs to the RRP15 family.

In Caenorhabditis elegans, this protein is RRP15-like protein.